We begin with the raw amino-acid sequence, 389 residues long: Large ribosomal subunit protein uL3 (389 aa).

This sequence belongs to the universal ribosomal protein uL3 family. Component of the large ribosomal subunit. Mature ribosomes consist of a small (40S) and a large (60S) subunit. The 40S subunit contains about 32 different proteins and 1 molecule of RNA (18S). The 60S subunit contains 45 different proteins and 3 molecules of RNA (25S, 5.8S and 5S).

Its subcellular location is the cytoplasm. Its function is as follows. Component of the ribosome, a large ribonucleoprotein complex responsible for the synthesis of proteins in the cell. The small ribosomal subunit (SSU) binds messenger RNAs (mRNAs) and translates the encoded message by selecting cognate aminoacyl-transfer RNA (tRNA) molecules. The large subunit (LSU) contains the ribosomal catalytic site termed the peptidyl transferase center (PTC), which catalyzes the formation of peptide bonds, thereby polymerizing the amino acids delivered by tRNAs into a polypeptide chain. The nascent polypeptides leave the ribosome through a tunnel in the LSU and interact with protein factors that function in enzymatic processing, targeting, and the membrane insertion of nascent chains at the exit of the ribosomal tunnel. RPL3 plays a role in coordinating processes of accommodating the aminoacyl-tRNA in the PTC. In Candida albicans (strain SC5314 / ATCC MYA-2876) (Yeast), this protein is Large ribosomal subunit protein uL3.